A 344-amino-acid chain; its full sequence is Lysophosphatidic acid receptor 6 (344 aa).

Over 1 to 19 the chain is Extracellular; that stretch reads MVSVNSSHCFYNDSFKYTL. N-linked (GlcNAc...) asparagine glycosylation occurs at asparagine 5. Residues 20–46 form a helical membrane-spanning segment; sequence YGCMFSMVFVLGLISNCVAIYIFICVL. At 47–55 the chain is on the cytoplasmic side; the sequence is KVRNETTTY. A helical membrane pass occupies residues 56-79; it reads MINLAMSDLLFVFTLPFRIFYFTT. Over 80–92 the chain is Extracellular; it reads RNWPFGDLLCKIS. Cysteine 89 and cysteine 168 form a disulfide bridge. A helical transmembrane segment spans residues 93 to 112; sequence VMLFYTNMYGSILFLTCISV. The Cytoplasmic segment spans residues 113–133; the sequence is DRFLAIVYPFKSKTLRTKRNA. The chain crosses the membrane as a helical span at residues 134 to 154; the sequence is KIVCTGVWLTVIGGSAPAVFV. The Extracellular segment spans residues 155 to 181; that stretch reads QSTHSQGNNASEACFENFPEATWKTYL. A helical membrane pass occupies residues 182–209; the sequence is SRIVIFIEIVGFFIPLILNVTCSSMVLK. Residues 210-227 are Cytoplasmic-facing; the sequence is TLTKPVTLSRSKINKTKV. The chain crosses the membrane as a helical span at residues 228–253; that stretch reads LKMIFVHLIIFCFCFVPYNINLILYS. The Extracellular portion of the chain corresponds to 254–272; it reads LVRTQTFVNCSVVAAVRTM. The chain crosses the membrane as a helical span at residues 273 to 292; that stretch reads YPITLCIAVSNCCFDPIVYY. A lipid anchor (S-palmitoyl cysteine) is attached at cysteine 284. The Cytoplasmic segment spans residues 293 to 344; the sequence is FTSDTIQNSIKMKNWSVRRSDFRFSEVHGAENFIQHNLQTLKSKIFDNESAA.

This sequence belongs to the G-protein coupled receptor 1 family. In terms of tissue distribution, expressed ubiquitously, including in skin and hair follicle cells. Detected in both Henle's and Huxley's layers of the inner root sheath of the hair follicle and in suprabasal layers of the epidermis (at protein level). Expressed at low levels in peripheral blood leukocytes.

The protein resides in the cell membrane. Binds to oleoyl-L-alpha-lysophosphatidic acid (LPA). Intracellular cAMP is involved in the receptor activation. Important for the maintenance of hair growth and texture. The polypeptide is Lysophosphatidic acid receptor 6 (LPAR6) (Homo sapiens (Human)).